Consider the following 757-residue polypeptide: MTSNRSNLLFSLVLFHFLFVPTQLQALNTDGVLLLTFKYSILTDPLSVLRNWNYDDATPCLWTGVTCTELGKPNTPDMFRVTSLVLPNKHLLGSITPDLFSIPYLRILDLSSNFFNGSLPDSVFNATELQSISLGSNNLSGDLPKSVNSVTNLQLLNLSANAFTGEIPLNISLLKNLTVVSLSKNTFSGDIPSGFEAAQILDLSSNLLNGSLPKDLGGKSLHYLNLSHNKVLGEISPNFAEKFPANATVDLSFNNLTGPIPSSLSLLNQKAESFSGNQELCGKPLKILCSIPSTLSNPPNISETTSPAIAVKPRSTAPINPLTEKPNQTGKSKLKPSTIAAITVADIVGLAFIGLLVLYVYQVRKRRRYPESSKFSFFKFCLEKNEAKKSKPSTTEVTVPESPEAKTTCGSCIILTGGRYDETSTSESDVENQQTVQAFTRTDGGQLKQSSQTQLVTVDGETRLDLDTLLKASAYILGTTGTGIVYKAVLENGTAFAVRRIETESCAAAKPKEFEREVRAIAKLRHPNLVRIRGFCWGDDEKLLISDYVPNGSLLCFFTATKASSSSSSSSSLQNPLTFEARLKIARGMARGLSYINEKKQVHGNIKPNNILLNAENEPIITDLGLDRLMTPARESHTTGPTSSSPYQPPEWSTSLKPNPKWDVYSFGVILLELLTSKVFSVDHDIDQFSNLSDSAAEENGRFLRLIDGAIRSDVARHEDAAMACFRLGIECVSSLPQKRPSMKELVQVLEKICVLV.

Positions 1–26 (MTSNRSNLLFSLVLFHFLFVPTQLQA) are cleaved as a signal peptide. LRR repeat units lie at residues 104-126 (YLRILDLSSNFFNGSLPDSVFNA), 128-150 (ELQSISLGSNNLSGDLPKSVNSV), 152-174 (NLQLLNLSANAFTGEIPLNISLL), 176-198 (NLTVVSLSKNTFSGDIPSGFEAA), 199-219 (QILDLSSNLLNGSLPKDLGGK), 220-242 (SLHYLNLSHNKVLGEISPNFAEK), and 245-267 (ANATVDLSFNNLTGPIPSSLSLL). The helical transmembrane segment at 339-359 (IAAITVADIVGLAFIGLLVLY) threads the bilayer. The Protein kinase domain occupies 471-753 (KASAYILGTT…KELVQVLEKI (283 aa)). The residue at position 473 (Ser473) is a Phosphoserine. Phosphothreonine is present on Thr494. Ser553 is subject to Phosphoserine. Residues 633–654 (ARESHTTGPTSSSPYQPPEWST) are disordered. A phosphothreonine mark is found at Thr638 and Thr639. Over residues 638–654 (TTGPTSSSPYQPPEWST) the composition is skewed to polar residues.

The protein belongs to the protein kinase superfamily.

It localises to the membrane. The sequence is that of Receptor protein kinase-like protein At4g34220 from Arabidopsis thaliana (Mouse-ear cress).